We begin with the raw amino-acid sequence, 348 residues long: Farnesoic acid carboxyl-O-methyltransferase (348 aa).

Residue Tyr-16 coordinates S-adenosyl-L-methionine. Substrate-binding positions include Tyr-16 and 19-23; that span reads HSKYQ. S-adenosyl-L-methionine-binding positions include Gly-57, 57 to 58, Asn-63, 94 to 97, 123 to 125, and 140 to 142; these read GC, FNDS, SFF, and SYS. A substrate-binding site is contributed by 141–145; that stretch reads YSLHF. Mg(2+) is bound by residues Asn-162, Asp-247, and Phe-249.

It belongs to the methyltransferase superfamily. SABATH family. As to quaternary structure, homodimer. Mg(2+) is required as a cofactor. As to expression, mostly expressed in leaves and, at very low levels, in roots, stems, flowers and siliques.

It catalyses the reaction (2E,6E)-farnesoate + S-adenosyl-L-methionine = methyl (2E,6E)-farnesoate + S-adenosyl-L-homocysteine. The catalysed reaction is juvenile hormone III carboxylate + S-adenosyl-L-methionine = juvenile hormone III + S-adenosyl-L-homocysteine. It participates in sesquiterpene biosynthesis. Its activity is regulated as follows. Activated by Mn(2+) ions. Strongly inhibited by Cu(2+), Zn(2+), Fe(3+) and Fe(2+) ions. Moderately inhibited by Na(+) and Ca(2+) ions. Rapidly degraded at temperatures above 40 degrees Celsius. Its function is as follows. May catalyze the production of the insect juvenile hormone methyl farnesoate (MeFA) to trigger defense against insect herbivory. The sequence is that of Farnesoic acid carboxyl-O-methyltransferase from Arabidopsis thaliana (Mouse-ear cress).